The following is a 304-amino-acid chain: Quinolinate synthase (304 aa).

Residues histidine 24 and serine 41 each coordinate iminosuccinate. Cysteine 86 is a [4Fe-4S] cluster binding site. Iminosuccinate-binding positions include 112–114 and serine 129; that span reads YVN. Cysteine 171 lines the [4Fe-4S] cluster pocket. Residues 197–199 and threonine 214 each bind iminosuccinate; that span reads HPE. [4Fe-4S] cluster is bound at residue cysteine 259.

This sequence belongs to the quinolinate synthase family. Type 2 subfamily. [4Fe-4S] cluster serves as cofactor.

The protein localises to the cytoplasm. The enzyme catalyses iminosuccinate + dihydroxyacetone phosphate = quinolinate + phosphate + 2 H2O + H(+). The protein operates within cofactor biosynthesis; NAD(+) biosynthesis; quinolinate from iminoaspartate: step 1/1. Its function is as follows. Catalyzes the condensation of iminoaspartate with dihydroxyacetone phosphate to form quinolinate. The sequence is that of Quinolinate synthase from Methanosarcina barkeri (strain Fusaro / DSM 804).